A 181-amino-acid polypeptide reads, in one-letter code: Alkyl hydroperoxide reductase AhpD (181 aa).

Cys-131 functions as the Proton donor in the catalytic mechanism. Residues Cys-131 and Cys-134 are joined by a disulfide bond. Cys-134 (cysteine sulfenic acid (-SOH) intermediate) is an active-site residue.

It belongs to the AhpD family.

The catalysed reaction is N(6)-[(R)-dihydrolipoyl]-L-lysyl-[lipoyl-carrier protein] + a hydroperoxide = N(6)-[(R)-lipoyl]-L-lysyl-[lipoyl-carrier protein] + an alcohol + H2O. In terms of biological role, antioxidant protein with alkyl hydroperoxidase activity. Required for the reduction of the AhpC active site cysteine residues and for the regeneration of the AhpC enzyme activity. This Bradyrhizobium sp. (strain ORS 278) protein is Alkyl hydroperoxide reductase AhpD.